A 121-amino-acid polypeptide reads, in one-letter code: Replication protein A 14 kDa subunit (121 aa).

Valine 2 bears the N-acetylvaline mark. Residues lysine 23, lysine 39, and lysine 88 each participate in a glycyl lysine isopeptide (Lys-Gly) (interchain with G-Cter in ubiquitin) cross-link.

It belongs to the replication factor A protein 3 family. As to quaternary structure, component of the canonical replication protein A complex (RPA), a heterotrimer composed of RPA1, RPA2 and RPA3. Also a component of the aRPA, the alternative replication protein A complex, a trimeric complex similar to the replication protein A complex/RPA but where RPA1 and RPA3 are associated with RPA4 instead of RPA2. Interacts with BRIP1/FANCJ via the RPA1 subunit; following DNA damage they colocalize in foci in the nucleus. In terms of processing, ubiquitinated by RFWD3 at stalled replication forks in response to DNA damage: ubiquitination by RFWD3 does not lead to degradation by the proteasome and promotes removal of the RPA complex from stalled replication forks, promoting homologous recombination.

The protein resides in the nucleus. Functionally, as part of the heterotrimeric replication protein A complex (RPA/RP-A), binds and stabilizes single-stranded DNA intermediates that form during DNA replication or upon DNA stress. It prevents their reannealing and in parallel, recruits and activates different proteins and complexes involved in DNA metabolism. Thereby, it plays an essential role both in DNA replication and the cellular response to DNA damage. In the cellular response to DNA damage, the RPA complex controls DNA repair and DNA damage checkpoint activation. Through recruitment of ATRIP activates the ATR kinase a master regulator of the DNA damage response. It is required for the recruitment of the DNA double-strand break repair factors RAD51 and RAD52 to chromatin, in response to DNA damage. Also recruits to sites of DNA damage proteins like XPA and XPG that are involved in nucleotide excision repair and is required for this mechanism of DNA repair. Also plays a role in base excision repair (BER), probably through interaction with UNG. RPA stimulates 5'-3' helicase activity of BRIP1/FANCJ. Also recruits SMARCAL1/HARP, which is involved in replication fork restart, to sites of DNA damage. May also play a role in telomere maintenance. RPA3 has its own single-stranded DNA-binding activity and may be responsible for polarity of the binding of the complex to DNA. As part of the alternative replication protein A complex, aRPA, binds single-stranded DNA and probably plays a role in DNA repair. Compared to the RPA2-containing, canonical RPA complex, may not support chromosomal DNA replication and cell cycle progression through S-phase. The aRPA may not promote efficient priming by DNA polymerase alpha but could support DNA synthesis by polymerase delta in presence of PCNA and replication factor C (RFC), the dual incision/excision reaction of nucleotide excision repair and RAD51-dependent strand exchange. The protein is Replication protein A 14 kDa subunit (RPA3) of Homo sapiens (Human).